A 254-amino-acid polypeptide reads, in one-letter code: Type III pantothenate kinase (254 aa).

6–13 (DVGNSNIV) is a binding site for ATP. Residues Tyr100 and 107-110 (GADR) contribute to the substrate site. Asp109 functions as the Proton acceptor in the catalytic mechanism. Position 129 (Asp129) interacts with K(+). Thr132 is an ATP binding site. Thr184 lines the substrate pocket.

The protein belongs to the type III pantothenate kinase family. As to quaternary structure, homodimer. The cofactor is NH4(+). K(+) is required as a cofactor.

The protein localises to the cytoplasm. It catalyses the reaction (R)-pantothenate + ATP = (R)-4'-phosphopantothenate + ADP + H(+). It functions in the pathway cofactor biosynthesis; coenzyme A biosynthesis; CoA from (R)-pantothenate: step 1/5. Catalyzes the phosphorylation of pantothenate (Pan), the first step in CoA biosynthesis. This chain is Type III pantothenate kinase, found in Geobacter sp. (strain M21).